The chain runs to 197 residues: Regulator of free ubiquitin chains 1 (197 aa).

This sequence belongs to the RFU1 family.

It localises to the endosome. Inhibitor of the DOA4 deubiquitinase involved in the regulation of protein degradation by the proteasome and maintenance of a normal level of free ubiquitin. The polypeptide is Regulator of free ubiquitin chains 1 (RFU1) (Vanderwaltozyma polyspora (strain ATCC 22028 / DSM 70294 / BCRC 21397 / CBS 2163 / NBRC 10782 / NRRL Y-8283 / UCD 57-17) (Kluyveromyces polysporus)).